A 487-amino-acid polypeptide reads, in one-letter code: N-succinylglutamate 5-semialdehyde dehydrogenase (487 aa).

Residue 221–226 (GSSDTG) coordinates NAD(+). Residues E244 and C278 contribute to the active site.

This sequence belongs to the aldehyde dehydrogenase family. AstD subfamily.

It catalyses the reaction N-succinyl-L-glutamate 5-semialdehyde + NAD(+) + H2O = N-succinyl-L-glutamate + NADH + 2 H(+). The protein operates within amino-acid degradation; L-arginine degradation via AST pathway; L-glutamate and succinate from L-arginine: step 4/5. Catalyzes the NAD-dependent reduction of succinylglutamate semialdehyde into succinylglutamate. The chain is N-succinylglutamate 5-semialdehyde dehydrogenase from Burkholderia ambifaria (strain MC40-6).